Consider the following 531-residue polypeptide: Tryptophan 6-halogenase ThaL (531 aa).

FAD is bound by residues glycine 13, threonine 15, alanine 16, alanine 39, isoleucine 42, isoleucine 45, valine 47, and alanine 50. The active site involves lysine 79. Proline 111 contacts L-tryptophan. The FAD site is built by methionine 198 and leucine 349. Residues serine 360 and glycine 361 each contribute to the chloride site. Residue isoleucine 362 coordinates FAD. 4 residues coordinate L-tryptophan: tyrosine 454, tyrosine 455, glutamate 461, and phenylalanine 465.

Belongs to the flavin-dependent halogenase family. Bacterial tryptophan halogenase subfamily. As to quaternary structure, homodimer. Monomer in solution.

It carries out the reaction L-tryptophan + FADH2 + chloride + O2 = 6-chloro-L-tryptophan + FAD + 2 H2O. The enzyme catalyses D-tryptophan + FADH2 + chloride + O2 = 6-chloro-D-tryptophan + FAD + 2 H2O. Functionally, involved in the biosynthesis of thienodolin, a plant growth-regulating compound. Catalyzes the chlorination of tryptophan (Trp) at C6 position to yield 6-chloro-tryptophan. It is also able to use bromide ions to generate monobrominated Trp. In vitro, accepts a wide range of amides and peptides carrying either L- or D-Trp at the N-terminus. This Streptomyces albogriseolus protein is Tryptophan 6-halogenase ThaL.